Here is a 415-residue protein sequence, read N- to C-terminus: Putative ankyrin repeat protein FPV034 (415 aa).

10 ANK repeats span residues 12–41 (ICIK…NINT), 43–72 (KHFN…NINI), 76–105 (VGYT…IINK), 107–135 (DYRL…NINV), 139–168 (KGYT…DISI), 170–200 (NKYS…DVNI), 203–232 (HVKA…DVNI), 237–266 (GGRT…NVDS), 270–299 (VGNT…DINV), and 303–332 (FGET…SLKV).

The chain is Putative ankyrin repeat protein FPV034 (ANK2) from Fowlpox virus (strain NVSL) (FPV).